The sequence spans 263 residues: MSSGLYSTEKRDFDTTLDLTQIRPYGDTMNDGKVQMSFTLPVACNEKGIEAALQLARKMGFVNPAVAFSEALDKEFSFYVVYGATSFSVDYTAIKVQALEIDTMDMHECEKYIEENFGREVVMVGASTGTDAHTVGIDAIMNMKGYAGHYGLERYKGVRAYNLGSQVPNEEFIKKAIELKADALLVSQTVTQKDVHIENLTNLVELLEAEGLRDKIILIAGGARITNDLAKELGYDAGFGPGKYADDVATFILKEMVQRGMNK.

The region spanning 120–259 is the B12-binding domain; it reads EVVMVGASTG…TFILKEMVQR (140 aa). Adenosylcob(III)alamin is bound by residues 130–136 and H133; that span reads TDAHTVG. K144 is subject to N6-(pyridoxal phosphate)lysine. Adenosylcob(III)alamin-binding positions include 185–192, 219–223, and 239–244; these read LVSQTVTQ, IAGGA, and FGPGKY.

It belongs to the KamE family. In terms of assembly, heterotetramer of 2 alpha and 2 beta subunits. Requires adenosylcob(III)alamin as cofactor. Pyridoxal 5'-phosphate is required as a cofactor.

The enzyme catalyses (3S)-3,6-diaminohexanoate = (3S,5S)-3,5-diaminohexanoate. It catalyses the reaction D-lysine = (2R,5S)-2,5-diaminohexanoate. It participates in amino-acid degradation; L-lysine degradation via acetate pathway. Functionally, catalyzes the migration of the L-beta-lysine and D-lysine epsilon amino group to the delta carbon to produce 3,5-diaminohexanoate and 2,5-diaminohexanoate, respectively. This is Lysine 5,6-aminomutase beta subunit from Fusobacterium nucleatum subsp. nucleatum (strain ATCC 25586 / DSM 15643 / BCRC 10681 / CIP 101130 / JCM 8532 / KCTC 2640 / LMG 13131 / VPI 4355).